The primary structure comprises 413 residues: Serine hydroxymethyltransferase (413 aa).

(6S)-5,6,7,8-tetrahydrofolate contacts are provided by residues L120 and 124-126 (GHL). The residue at position 228 (K228) is an N6-(pyridoxal phosphate)lysine.

Belongs to the SHMT family. Homodimer. Pyridoxal 5'-phosphate serves as cofactor.

Its subcellular location is the cytoplasm. It catalyses the reaction (6R)-5,10-methylene-5,6,7,8-tetrahydrofolate + glycine + H2O = (6S)-5,6,7,8-tetrahydrofolate + L-serine. The protein operates within one-carbon metabolism; tetrahydrofolate interconversion. It participates in amino-acid biosynthesis; glycine biosynthesis; glycine from L-serine: step 1/1. Catalyzes the reversible interconversion of serine and glycine with tetrahydrofolate (THF) serving as the one-carbon carrier. This reaction serves as the major source of one-carbon groups required for the biosynthesis of purines, thymidylate, methionine, and other important biomolecules. Also exhibits THF-independent aldolase activity toward beta-hydroxyamino acids, producing glycine and aldehydes, via a retro-aldol mechanism. In Agathobacter rectalis (strain ATCC 33656 / DSM 3377 / JCM 17463 / KCTC 5835 / VPI 0990) (Eubacterium rectale), this protein is Serine hydroxymethyltransferase.